The chain runs to 222 residues: UPF0758 protein Ppha_0935 (222 aa).

One can recognise an MPN domain in the interval 100-222; the sequence is KIQAARDVFE…CFSFRESGLL (123 aa). Zn(2+) is bound by residues His171, His173, and Asp184. Positions 171 to 184 match the JAMM motif motif; it reads HNHPSGDVEPSNAD.

The protein belongs to the UPF0758 family.

This chain is UPF0758 protein Ppha_0935, found in Pelodictyon phaeoclathratiforme (strain DSM 5477 / BU-1).